We begin with the raw amino-acid sequence, 861 residues long: Probable alpha,alpha-trehalose-phosphate synthase [UDP-forming] 10 (861 aa).

The residue at position 5 (serine 5) is a Phosphoserine. Threonine 32 carries the post-translational modification Phosphothreonine. Positions 59 to 546 (ERKIIVANFL…ARSFSQDLER (488 aa)) are glycosyltransferase.

This sequence in the N-terminal section; belongs to the glycosyltransferase 20 family. In the C-terminal section; belongs to the trehalose phosphatase family.

The enzyme catalyses D-glucose 6-phosphate + UDP-alpha-D-glucose = alpha,alpha-trehalose 6-phosphate + UDP + H(+). The chain is Probable alpha,alpha-trehalose-phosphate synthase [UDP-forming] 10 (TPS10) from Arabidopsis thaliana (Mouse-ear cress).